The chain runs to 364 residues: Peptide chain release factor 2 (364 aa).

Residue Gln251 is modified to N5-methylglutamine.

Belongs to the prokaryotic/mitochondrial release factor family. Post-translationally, methylated by PrmC. Methylation increases the termination efficiency of RF2.

The protein localises to the cytoplasm. Peptide chain release factor 2 directs the termination of translation in response to the peptide chain termination codons UGA and UAA. This chain is Peptide chain release factor 2, found in Campylobacter hominis (strain ATCC BAA-381 / DSM 21671 / CCUG 45161 / LMG 19568 / NCTC 13146 / CH001A).